We begin with the raw amino-acid sequence, 349 residues long: tRNA N6-adenosine threonylcarbamoyltransferase (349 aa).

Fe cation-binding residues include His-114 and His-118. Residues 136–140, Asp-169, Gly-182, and Asn-280 each bind substrate; that span reads IMSGG. Asp-308 lines the Fe cation pocket.

It belongs to the KAE1 / TsaD family. Requires Fe(2+) as cofactor.

It localises to the cytoplasm. It catalyses the reaction L-threonylcarbamoyladenylate + adenosine(37) in tRNA = N(6)-L-threonylcarbamoyladenosine(37) in tRNA + AMP + H(+). Functionally, required for the formation of a threonylcarbamoyl group on adenosine at position 37 (t(6)A37) in tRNAs that read codons beginning with adenine. Is involved in the transfer of the threonylcarbamoyl moiety of threonylcarbamoyl-AMP (TC-AMP) to the N6 group of A37, together with TsaE and TsaB. TsaD likely plays a direct catalytic role in this reaction. The polypeptide is tRNA N6-adenosine threonylcarbamoyltransferase (Ehrlichia chaffeensis (strain ATCC CRL-10679 / Arkansas)).